Consider the following 189-residue polypeptide: Large ribosomal subunit protein eL18 (189 aa).

It belongs to the eukaryotic ribosomal protein eL18 family.

The protein resides in the cytoplasm. This chain is Large ribosomal subunit protein eL18 (RpL18), found in Drosophila pseudoobscura pseudoobscura (Fruit fly).